A 248-amino-acid polypeptide reads, in one-letter code: Adenosylcobinamide-GDP ribazoletransferase (248 aa).

The next 6 helical transmembrane spans lie at 28–48 (LFWFPVVGLFLGLLQAGAGYL), 103–123 (VGSFGAIGLILLFLFKSIVLV), 126–146 (LAFGLYPWIVSGVLLARLVQV), 169–189 (AGIQHFVAAFLVALFILLLLM), 193–213 (MLPSGIGLSAAIAGAVLMSLL), and 225–245 (VLGASSEFTEVLVWVSGVFLA).

This sequence belongs to the CobS family. It depends on Mg(2+) as a cofactor.

It is found in the cell inner membrane. The enzyme catalyses alpha-ribazole + adenosylcob(III)inamide-GDP = adenosylcob(III)alamin + GMP + H(+). It catalyses the reaction alpha-ribazole 5'-phosphate + adenosylcob(III)inamide-GDP = adenosylcob(III)alamin 5'-phosphate + GMP + H(+). It functions in the pathway cofactor biosynthesis; adenosylcobalamin biosynthesis; adenosylcobalamin from cob(II)yrinate a,c-diamide: step 7/7. Functionally, joins adenosylcobinamide-GDP and alpha-ribazole to generate adenosylcobalamin (Ado-cobalamin). Also synthesizes adenosylcobalamin 5'-phosphate from adenosylcobinamide-GDP and alpha-ribazole 5'-phosphate. This is Adenosylcobinamide-GDP ribazoletransferase from Chlorobium phaeobacteroides (strain BS1).